The chain runs to 715 residues: Lanosterol synthase erg7B (715 aa).

One copy of the PFTB 1 repeat lies at 111–153 (AIEIKNYLMARANPVDGGWGLHSEGDSSVFGTSLNYTVLRLLG). Residue Asp445 is the Proton donor of the active site. PFTB repeat units lie at residues 550-590 (IQRG…RSAG) and 599-640 (VRRG…VVQT).

The protein belongs to the terpene cyclase/mutase family.

The protein resides in the lipid droplet. Its subcellular location is the endoplasmic reticulum membrane. It carries out the reaction (S)-2,3-epoxysqualene = lanosterol. It functions in the pathway steroid metabolism; ergosterol biosynthesis. In terms of biological role, lanosterol synthase; part of the third module of ergosterol biosynthesis pathway that includes the late steps of the pathway. ERG7A and ERG7B catalyze the cyclization of (S)-2,3 oxidosqualene to lanosterol, a reaction that forms the sterol core. The third module or late pathway involves the ergosterol synthesis itself through consecutive reactions that mainly occur in the endoplasmic reticulum (ER) membrane. Firstly, the squalene synthase erg9 catalyzes the condensation of 2 farnesyl pyrophosphate moieties to form squalene, which is the precursor of all steroids. Squalene synthase is crucial for balancing the incorporation of farnesyl diphosphate (FPP) into sterol and nonsterol isoprene synthesis. Secondly, squalene is converted into lanosterol by the consecutive action of the squalene epoxidase erg1 and the lanosterol synthase erg7. Then, the delta(24)-sterol C-methyltransferase erg6 methylates lanosterol at C-24 to produce eburicol. Eburicol is the substrate of the sterol 14-alpha demethylase encoded by cyp51A and cyp51B, to yield 4,4,24-trimethyl ergosta-8,14,24(28)-trienol. The C-14 reductase erg24 then reduces the C14=C15 double bond which leads to 4,4-dimethylfecosterol. A sequence of further demethylations at C-4, involving the C-4 demethylation complex containing the C-4 methylsterol oxidases erg25A or erg25B, the sterol-4-alpha-carboxylate 3-dehydrogenase erg26 and the 3-keto-steroid reductase erg27, leads to the production of fecosterol via 4-methylfecosterol. The C-8 sterol isomerase erg2 then catalyzes the reaction which results in unsaturation at C-7 in the B ring of sterols and thus converts fecosterol to episterol. The sterol-C5-desaturase erg3B then catalyzes the introduction of a C-5 double bond in the B ring to produce 5-dehydroepisterol. The 2 other sterol-C5-desaturases, erg3A and erg3C, seem to be less important in ergosterol biosynthesis. The C-22 sterol desaturase erg5 further converts 5-dehydroepisterol into ergosta-5,7,22,24(28)-tetraen-3beta-ol by forming the C-22(23) double bond in the sterol side chain. Finally, ergosta-5,7,22,24(28)-tetraen-3beta-ol is substrate of the C-24(28) sterol reductases erg4A and erg4B to produce ergosterol. Possible alternative sterol biosynthetic pathways might exist from fecosterol to ergosterol, depending on the activities of the erg3 isoforms. This is Lanosterol synthase erg7B from Aspergillus fumigatus (strain ATCC MYA-4609 / CBS 101355 / FGSC A1100 / Af293) (Neosartorya fumigata).